The chain runs to 275 residues: MGIKKFKPTTPSRRHMTTMSFEEITKQEPEKSLIAPLKRKAGRNVKGRITVRHRGGGHKRQYRIVDFRRVKDNVPARVAAIEYDPNRSAHIALLHYFDGHKAYIIAPHNLRVGDVIESGPNADIKTGNTLPLKDIPVGSLIHNIELRPGKGAQLVRSAGAVAQLMAKEGAYAHVRLPSGEVRLIHVNCRATIGQVGNLEHENMTLGKAGRSRWLGIRPGVRGSVMNPTDHPHGGGEGRAPIGRKYPVSPWGKIAIGGKTRRKKPSDNMIVRKRKP.

2 disordered regions span residues 222–243 (GSVM…PIGR) and 256–275 (GGKT…KRKP).

The protein belongs to the universal ribosomal protein uL2 family. As to quaternary structure, part of the 50S ribosomal subunit. Forms a bridge to the 30S subunit in the 70S ribosome.

Functionally, one of the primary rRNA binding proteins. Required for association of the 30S and 50S subunits to form the 70S ribosome, for tRNA binding and peptide bond formation. It has been suggested to have peptidyltransferase activity; this is somewhat controversial. Makes several contacts with the 16S rRNA in the 70S ribosome. This is Large ribosomal subunit protein uL2 from Syntrophomonas wolfei subsp. wolfei (strain DSM 2245B / Goettingen).